The primary structure comprises 216 residues: Adenylate kinase (216 aa).

Gly-11–Thr-16 contacts ATP. The interval Ala-31–Val-60 is NMP. AMP-binding positions include Thr-32, Arg-37, Glu-58–Val-60, Gly-86–Arg-89, and Gln-93. The interval Gly-127–Asp-163 is LID. Arg-128 is a binding site for ATP. Zn(2+) is bound by residues Cys-131, Cys-134, Cys-150, and Cys-153. The AMP site is built by Arg-160 and Arg-171. ATP is bound at residue Ala-199.

It belongs to the adenylate kinase family. As to quaternary structure, monomer.

It localises to the cytoplasm. The enzyme catalyses AMP + ATP = 2 ADP. It participates in purine metabolism; AMP biosynthesis via salvage pathway; AMP from ADP: step 1/1. Its function is as follows. Catalyzes the reversible transfer of the terminal phosphate group between ATP and AMP. Plays an important role in cellular energy homeostasis and in adenine nucleotide metabolism. The protein is Adenylate kinase of Dehalococcoides mccartyi (strain ATCC BAA-2266 / KCTC 15142 / 195) (Dehalococcoides ethenogenes (strain 195)).